The chain runs to 337 residues: Eukaryotic translation initiation factor 3 subunit H (337 aa).

An MPN domain is found at 21–153 (VQCDGLAVMK…LKAYRLTPQA (133 aa)).

The protein belongs to the eIF-3 subunit H family. Component of the eukaryotic translation initiation factor 3 (eIF-3) complex. The eIF-3 complex interacts with pix. Interacts with mxt.

The protein resides in the cytoplasm. Its function is as follows. Component of the eukaryotic translation initiation factor 3 (eIF-3) complex, which is involved in protein synthesis of a specialized repertoire of mRNAs and, together with other initiation factors, stimulates binding of mRNA and methionyl-tRNAi to the 40S ribosome. The eIF-3 complex specifically targets and initiates translation of a subset of mRNAs involved in cell proliferation. This Drosophila ananassae (Fruit fly) protein is Eukaryotic translation initiation factor 3 subunit H.